Reading from the N-terminus, the 427-residue chain is UDP-N-acetylglucosamine 1-carboxyvinyltransferase 1 (427 aa).

23 to 24 (KN) contacts phosphoenolpyruvate. Arg-96 serves as a coordination point for UDP-N-acetyl-alpha-D-glucosamine. Cys-120 serves as the catalytic Proton donor. Cys-120 is subject to 2-(S-cysteinyl)pyruvic acid O-phosphothioketal. Residues 125 to 129 (RPIDL), Asp-309, and Val-331 contribute to the UDP-N-acetyl-alpha-D-glucosamine site.

The protein belongs to the EPSP synthase family. MurA subfamily.

It localises to the cytoplasm. The enzyme catalyses phosphoenolpyruvate + UDP-N-acetyl-alpha-D-glucosamine = UDP-N-acetyl-3-O-(1-carboxyvinyl)-alpha-D-glucosamine + phosphate. The protein operates within cell wall biogenesis; peptidoglycan biosynthesis. In terms of biological role, cell wall formation. Adds enolpyruvyl to UDP-N-acetylglucosamine. The protein is UDP-N-acetylglucosamine 1-carboxyvinyltransferase 1 of Streptococcus pneumoniae serotype 4 (strain ATCC BAA-334 / TIGR4).